The chain runs to 35 residues: MKKTFLPIFLVILLASYALGNPQITFSKDWRPGKK.

The N-terminal stretch at 1–22 (MKKTFLPIFLVILLASYALGNP) is a signal peptide. Gln23 carries the post-translational modification Pyrrolidone carboxylic acid. Position 32 is a proline amide (Pro32).

The protein belongs to the limacoditoxin-1 (ACP-like) family. Expressed by the venom secretory cell of the spine. The spine is a cuticular structure containing a single large nucleated venom-secreting cell at its base. It is an independent unit capable of producing, storing and injecting venom. On the back of D.vulnerans caterpillars, spines are grouped together by 50 to 100 to form scoli, of which there are eight in D.vulnerans.

It localises to the secreted. Potently activates insect GPCR. More precisely, it activates the ACP receptor (ACPR) from the mosquito A.aegypti (EC(50)=3.07 nM) with a potency comparable to that of the endogenous ligand. Has no activity on receptors of the closely related neuropeptides adipokinetic hormone and corazonin. In vivo, does not reveal any observable effects when injected into crickets (A.domesticus). Does not induce increase in intracellular calcium in mouse DRG neurons, suggesting that it does not induce pain. The polypeptide is Z-limacoditoxin(1)-Dv4 (Doratifera vulnerans (Mottled cup moth)).